Consider the following 169-residue polypeptide: Lipoprotein signal peptidase (169 aa).

Transmembrane regions (helical) follow at residues 4 to 24 (PICS…ILDI), 29 to 49 (WVMA…FNLT), 70 to 90 (WFFA…MYRS), and 101 to 121 (YALI…HGAV). Catalysis depends on residues aspartate 123 and aspartate 141. A helical transmembrane segment spans residues 137–157 (FNLADVAISIGAVLVIFEGFL).

It belongs to the peptidase A8 family.

Its subcellular location is the cell inner membrane. It catalyses the reaction Release of signal peptides from bacterial membrane prolipoproteins. Hydrolyzes -Xaa-Yaa-Zaa-|-(S,diacylglyceryl)Cys-, in which Xaa is hydrophobic (preferably Leu), and Yaa (Ala or Ser) and Zaa (Gly or Ala) have small, neutral side chains.. It participates in protein modification; lipoprotein biosynthesis (signal peptide cleavage). Its function is as follows. This protein specifically catalyzes the removal of signal peptides from prolipoproteins. This chain is Lipoprotein signal peptidase, found in Yersinia pseudotuberculosis serotype O:1b (strain IP 31758).